The following is an 82-amino-acid chain: uncharacterized protein (82 aa).

It belongs to the chlamydial CPn_0711/CT_665/TC_0036 family.

This is an uncharacterized protein from Chlamydia pneumoniae (Chlamydophila pneumoniae).